The following is a 188-amino-acid chain: dCTP deaminase (188 aa).

DCTP is bound by residues 111–116 (KSTYAR), 135–137 (TLE), Gln-156, Tyr-170, and Gln-180. Residue Glu-137 is the Proton donor/acceptor of the active site.

It belongs to the dCTP deaminase family. Homotrimer.

The enzyme catalyses dCTP + H2O + H(+) = dUTP + NH4(+). It participates in pyrimidine metabolism; dUMP biosynthesis; dUMP from dCTP (dUTP route): step 1/2. Functionally, catalyzes the deamination of dCTP to dUTP. The chain is dCTP deaminase from Aromatoleum aromaticum (strain DSM 19018 / LMG 30748 / EbN1) (Azoarcus sp. (strain EbN1)).